Reading from the N-terminus, the 396-residue chain is L-aspartate--glyoxylate aminotransferase (396 aa).

K196 carries the post-translational modification N6-(pyridoxal phosphate)lysine.

This sequence belongs to the class-V pyridoxal-phosphate-dependent aminotransferase family. Pyridoxal 5'-phosphate is required as a cofactor.

The enzyme catalyses oxaloacetate + glycine = glyoxylate + L-aspartate. In terms of biological role, catalyzes the transamination of glyoxylate into glycine using L-aspartate as the preferred amino group donor. Is essential for the growth of P.denitrificans in the presence of glycolate and glyoxylate since it functions in glyoxylate assimilation via the beta-hydroxyaspartate cycle (BHAC). Can catalyze the reverse reaction in vitro, and also use L-serine and L-glutamate as amino group donor, but with much less efficiency than L-aspartate. The protein is L-aspartate--glyoxylate aminotransferase of Paracoccus denitrificans (strain Pd 1222).